Here is a 785-residue protein sequence, read N- to C-terminus: Formin-like protein 3 (785 aa).

The N-terminal stretch at 1 to 20 is a signal peptide; that stretch reads MGRLRLAFLAISLVVFVCVS. A disordered region spans residues 96–145; it reads YDWLAPASSPNEPPAETPDESSPSPSEETPSVVAPSQSVPGPPRPPPQRE. Low complexity predominate over residues 115 to 134; it reads ESSPSPSEETPSVVAPSQSV. A helical membrane pass occupies residues 154-174; the sequence is LIIAVASTAVLTFVFVALMFL. Disordered regions lie at residues 184–228, 241–329, and 730–785; these read AVGS…KKRS, EFST…APKT, and ETTK…SSPS. Positions 201–223 are enriched in polar residues; sequence STGSTENSPTVASTSRKMFSVAS. Residues 256-303 are compositionally biased toward pro residues; sequence LKLPPGRSAPPPPPAAAPPPQPPPPPPPKPQPPPPPKIARPPPAPPKG. Residues 321–747 form the FH2 domain; it reads DSETGAPKTK…SGKKESEMTT (427 aa). A compositionally biased stretch (polar residues) spans 745–754; the sequence is MTTSDSNQPS. The segment covering 773–785 has biased composition (acidic residues); sequence SDDSDDEEDSSPS.

This sequence belongs to the formin-like family. Class-I subfamily.

It is found in the membrane. Functionally, acts as actin nucleation factor that directs the formation of actin cables and polarized growth in pollen tubes. In Arabidopsis thaliana (Mouse-ear cress), this protein is Formin-like protein 3 (FH3).